Here is a 293-residue protein sequence, read N- to C-terminus: MEIKKGTWIIKKGFAEMFKGGVIMDVTSAEQAKIAEEAGAVAVMALERVPADIRKEGGVARMASIAKIREIMEAVSIPVMAKVRIGHIAEAKILEELGVDFIDESEVLTPADDRFHINKHEFKVPFVCGARDLGEALRRIAEGAAMIRTKGEAGTGNVVEAVKHMRRMMEQIKQVTKMEDEELVAYGKEIGAPVELLREVKRLGRLPVVNFAAGGVATPADAALMMMLGADGVFVGSGIFKSKDPRKMAKAMVLAVTYWDNPRILLKISEDIGEPMRGLDVEELEVRMQERGW.

Aspartate 25 contacts D-ribose 5-phosphate. Lysine 82 functions as the Schiff-base intermediate with D-ribose 5-phosphate in the catalytic mechanism. Glycine 154 provides a ligand contact to D-ribose 5-phosphate. Arginine 166 provides a ligand contact to D-glyceraldehyde 3-phosphate. Residues glycine 215 and 236 to 237 contribute to the D-ribose 5-phosphate site; that span reads GS.

This sequence belongs to the PdxS/SNZ family. As to quaternary structure, in the presence of PdxT, forms a dodecamer of heterodimers.

It catalyses the reaction aldehydo-D-ribose 5-phosphate + D-glyceraldehyde 3-phosphate + L-glutamine = pyridoxal 5'-phosphate + L-glutamate + phosphate + 3 H2O + H(+). It participates in cofactor biosynthesis; pyridoxal 5'-phosphate biosynthesis. Functionally, catalyzes the formation of pyridoxal 5'-phosphate from ribose 5-phosphate (RBP), glyceraldehyde 3-phosphate (G3P) and ammonia. The ammonia is provided by the PdxT subunit. Can also use ribulose 5-phosphate and dihydroxyacetone phosphate as substrates, resulting from enzyme-catalyzed isomerization of RBP and G3P, respectively. The protein is Pyridoxal 5'-phosphate synthase subunit PdxS of Thermotoga petrophila (strain ATCC BAA-488 / DSM 13995 / JCM 10881 / RKU-1).